The following is a 260-amino-acid chain: Serine protease VLSP-1 (260 aa).

The first 18 residues, 1–18, serve as a signal peptide directing secretion; that stretch reads MVLIRVLANLLVLHLSYA. Positions 19–24 are excised as a propeptide; that stretch reads QKSSEL. In terms of domain architecture, Peptidase S1 spans 25–251; the sequence is VIGGDECNIN…YSDWIQSIIA (227 aa). Disulfide bonds link Cys-31–Cys-165, Cys-52–Cys-68, Cys-100–Cys-258, Cys-144–Cys-212, Cys-176–Cys-191, and Cys-202–Cys-227. The N-linked (GlcNAc...) asparagine glycan is linked to Asn-44. Catalysis depends on His-67, which acts as the Charge relay system. An N-linked (GlcNAc...) asparagine glycan is attached at Asn-103. Catalysis depends on Asp-112, which acts as the Charge relay system. An N-linked (GlcNAc...) asparagine glycan is attached at Asn-156. Ser-206 serves as the catalytic Charge relay system.

This sequence belongs to the peptidase S1 family. Snake venom subfamily. Expressed by the venom gland.

It is found in the secreted. In terms of biological role, snake venom serine protease that may act in the hemostasis system of the prey. The polypeptide is Serine protease VLSP-1 (Macrovipera lebetinus (Levantine viper)).